A 141-amino-acid polypeptide reads, in one-letter code: ATP synthase F(0) complex subunit C3, mitochondrial (141 aa).

Residues 1-66 constitute a mitochondrion transit peptide; sequence MFACAKLART…REFQTSVISR (66 aa). A helical membrane pass occupies residues 82 to 102; that stretch reads VGVAGSGAGIGTVFGSLIIGY. K109 carries the post-translational modification N6,N6,N6-trimethyllysine. Residues 117 to 137 form a helical membrane-spanning segment; that stretch reads ILGFALSEAMGLFCLMVAFLI.

This sequence belongs to the ATPase C chain family. F-type ATPases have 2 components, CF(1) - the catalytic core - and CF(0) - the membrane proton channel. CF(1) has five subunits: alpha(3), beta(3), gamma(1), delta(1), epsilon(1). CF(0) has three main subunits: a, b and c. Interacts with TMEM70 and TMEM242. Post-translationally, trimethylated by ATPSCKMT at Lys-109. Methylation is required for proper incorporation of the C subunit into the ATP synthase complex and mitochondrial respiration.

It is found in the mitochondrion membrane. Its function is as follows. Mitochondrial membrane ATP synthase (F(1)F(0) ATP synthase or Complex V) produces ATP from ADP in the presence of a proton gradient across the membrane which is generated by electron transport complexes of the respiratory chain. F-type ATPases consist of two structural domains, F(1) - containing the extramembraneous catalytic core and F(0) - containing the membrane proton channel, linked together by a central stalk and a peripheral stalk. During catalysis, ATP synthesis in the catalytic domain of F(1) is coupled via a rotary mechanism of the central stalk subunits to proton translocation. Part of the complex F(0) domain. A homomeric c-ring of probably 10 subunits is part of the complex rotary element. The polypeptide is ATP synthase F(0) complex subunit C3, mitochondrial (Mus musculus (Mouse)).